A 478-amino-acid polypeptide reads, in one-letter code: Receptor-interacting serine/threonine-protein kinase 3 (478 aa).

S2 bears the Phosphoserine mark. The Protein kinase domain occupies 22–290 (LENLGFVGKG…CESKTNNVYI (269 aa)). ATP-binding positions include 28-36 (VGKGGFGAV) and K51. Residue D143 is the Proton acceptor of the active site. S165 bears the Phosphoserine mark. T185 carries the phosphothreonine modification. Phosphoserine; by autocatalysis is present on S201. At T228 the chain carries Phosphothreonine. S229 is modified (phosphoserine; by autocatalysis). T254 is modified (phosphothreonine). S301 and S323 each carry phosphoserine. The disordered stretch occupies residues 311–330 (RSSDTKLSARESSQKGTEVD). Residues 313 to 330 (SDTKLSARESSQKGTEVD) are compositionally biased toward basic and acidic residues. T335 is modified (phosphothreonine). A phosphoserine mark is found at S350, S369, and S380. A disordered region spans residues 362–429 (ERRGKEASFG…RNSNPWYTWN (68 aa)). Residues 376-385 (AGTSSDTLAG) are compositionally biased toward polar residues. Position 392 is a phosphothreonine (T392). A compositionally biased stretch (polar residues) spans 413–429 (QRNQGDGRNSNPWYTWN). The RIP homotypic interaction motif (RHIM) signature appears at 437–461 (LQSIVLNNCSEVQIGQHNCMSVQPR). At R474 the chain carries Omega-N-methylarginine.

The protein belongs to the protein kinase superfamily. TKL Ser/Thr protein kinase family. As to quaternary structure, interacts (via RIP homotypic interaction motif) with RIPK1 (via RIP homotypic interaction motif); this interaction induces RIPK1 phosphorylation and formation of a RIPK1-RIPK3 necrosis-inducing complex. Interacts with MLKL; the interaction is direct and triggers necroptosis. Interacts with ZBP1 (via RIP homotypic interaction motif); interaction with ZBP1 activates RIPK3, triggering necroptosis. Upon TNF-induced necrosis, the RIPK1-RIPK3 dimer further interacts with PGAM5 and MLKL; the formation of this complex leads to PGAM5 phosphorylation and increase in PGAM5 phosphatase activity. Binds TRAF2 and is recruited to the TNFR-1 signaling complex. Interacts with PYGL, GLUL and GLUD1; these interactions result in activation of these metabolic enzymes. Interacts with BIRC2/c-IAP1, BIRC3/c-IAP2 and XIAP/BIRC4. Interacts with ARHGEF2. Interacts with PELI1 (via atypical FHA domain); the phosphorylated form at Thr-185 binds preferentially to PELI1. Interacts with BUB1B, TRAF2 and STUB1. Interacts with CASP6. Component of the AIM2 PANoptosome complex, a multiprotein complex that drives inflammatory cell death (PANoptosis). RIPK1 and RIPK3 undergo reciprocal auto- and trans-phosphorylation. Autophosphorylated following interaction with ZBP1. Phosphorylation of Ser-201 plays a role in the necroptotic function of RIPK3. Autophosphorylates at Thr-228 and Ser-229 following activation by ZBP1: phosphorylation at these sites is a hallmark of necroptosis and is required for binding MLKL. Phosphorylation at Thr-185 is important for its kinase activity, interaction with PELI1 and for its ability to mediate TNF-induced necroptosis. Post-translationally, polyubiquitinated with 'Lys-48' and 'Lys-63'-linked chains by BIRC2/c-IAP1 and BIRC3/c-IAP2, leading to activation of NF-kappa-B. Ubiquitinated by STUB1 leading to its subsequent proteasome-dependent degradation.

The protein resides in the cytoplasm. Its subcellular location is the cytosol. It is found in the nucleus. It carries out the reaction L-seryl-[protein] + ATP = O-phospho-L-seryl-[protein] + ADP + H(+). The catalysed reaction is L-threonyl-[protein] + ATP = O-phospho-L-threonyl-[protein] + ADP + H(+). Activity is stimulated by ZBP1, which senses double-stranded Z-RNA structures. RIPK3-dependent necroptosis is inhibited by RIPK1: RIPK1 prevents the ZBP1-induced activation of RIPK3 via FADD-mediated recruitment of CASP8, which cleaves RIPK1 and limits TNF-induced necroptosis. In terms of biological role, serine/threonine-protein kinase that activates necroptosis and apoptosis, two parallel forms of cell death. Necroptosis, a programmed cell death process in response to death-inducing TNF-alpha family members, is triggered by RIPK3 following activation by ZBP1. Activated RIPK3 forms a necrosis-inducing complex and mediates phosphorylation of MLKL, promoting MLKL localization to the plasma membrane and execution of programmed necrosis characterized by calcium influx and plasma membrane damage. In addition to TNF-induced necroptosis, necroptosis can also take place in the nucleus in response to orthomyxoviruses infection: following ZBP1 activation, which senses double-stranded Z-RNA structures, nuclear RIPK3 catalyzes phosphorylation and activation of MLKL, promoting disruption of the nuclear envelope and leakage of cellular DNA into the cytosol. Also regulates apoptosis: apoptosis depends on RIPK1, FADD and CASP8, and is independent of MLKL and RIPK3 kinase activity. Phosphorylates RIPK1: RIPK1 and RIPK3 undergo reciprocal auto- and trans-phosphorylation. In some cell types, also able to restrict viral replication by promoting cell death-independent responses. In response to flavivirus infection in neurons, promotes a cell death-independent pathway that restricts viral replication: together with ZBP1, promotes a death-independent transcriptional program that modifies the cellular metabolism via up-regulation expression of the enzyme ACOD1/IRG1 and production of the metabolite itaconate. Itaconate inhibits the activity of succinate dehydrogenase, generating a metabolic state in neurons that suppresses replication of viral genomes. RIPK3 binds to and enhances the activity of three metabolic enzymes: GLUL, GLUD1, and PYGL. These metabolic enzymes may eventually stimulate the tricarboxylic acid cycle and oxidative phosphorylation, which could result in enhanced ROS production. The polypeptide is Receptor-interacting serine/threonine-protein kinase 3 (Rattus norvegicus (Rat)).